We begin with the raw amino-acid sequence, 269 residues long: Interleukin-1 beta (269 aa).

A propeptide spanning residues 1–116 (MAEVPELASE…TRNNDACVHD (116 aa)) is cleaved from the precursor.

It belongs to the IL-1 family. As to quaternary structure, monomer. In its precursor form, weakly interacts with full-length MEFV; the mature cytokine does not interact at all. Interacts with integrins ITGAV:ITGBV and ITGA5:ITGB1; integrin-binding is required for IL1B signaling. Interacts with cargo receptor TMED10; the interaction is direct and is required for the secretion of IL1B mature form. Interacts with HSP90AB1; the interaction facilitates cargo translocation into the ERGIC. Interacts with HSP90B1; the interaction facilitates cargo translocation into the ERGIC.

The protein localises to the cytoplasm. The protein resides in the cytosol. It is found in the secreted. It localises to the lysosome. Its subcellular location is the extracellular exosome. Functionally, potent pro-inflammatory cytokine. Initially discovered as the major endogenous pyrogen, induces prostaglandin synthesis, neutrophil influx and activation, T-cell activation and cytokine production, B-cell activation and antibody production, and fibroblast proliferation and collagen production. Promotes Th17 differentiation of T-cells. Synergizes with IL12/interleukin-12 to induce IFNG synthesis from T-helper 1 (Th1) cells. Plays a role in angiogenesis by inducing VEGF production synergistically with TNF and IL6. Involved in transduction of inflammation downstream of pyroptosis: its mature form is specifically released in the extracellular milieu by passing through the gasdermin-D (GSDMD) pore. This chain is Interleukin-1 beta (IL1B), found in Macaca nemestrina (Pig-tailed macaque).